The sequence spans 277 residues: Putative protein-disulfide oxidoreductase RC0029 (277 aa).

The N-terminal stretch at M1–A22 is a signal peptide. The tract at residues E34–Q80 is disordered. The span at N39 to Q80 shows a compositional bias: polar residues. In terms of domain architecture, Thioredoxin spans A76–E265. Residues C118 and C121 are joined by a disulfide bond.

The protein belongs to the thioredoxin family. DsbA subfamily.

It localises to the periplasm. In terms of biological role, may be required for disulfide bond formation in some proteins. This Rickettsia conorii (strain ATCC VR-613 / Malish 7) protein is Putative protein-disulfide oxidoreductase RC0029.